The sequence spans 479 residues: Glycogen synthase (479 aa).

Residue Lys15 participates in ADP-alpha-D-glucose binding.

Belongs to the glycosyltransferase 1 family. Bacterial/plant glycogen synthase subfamily.

The enzyme catalyses [(1-&gt;4)-alpha-D-glucosyl](n) + ADP-alpha-D-glucose = [(1-&gt;4)-alpha-D-glucosyl](n+1) + ADP + H(+). Its pathway is glycan biosynthesis; glycogen biosynthesis. Functionally, synthesizes alpha-1,4-glucan chains using ADP-glucose. This chain is Glycogen synthase, found in Clostridium novyi (strain NT).